A 245-amino-acid chain; its full sequence is DNA polymerase III subunit epsilon (245 aa).

A divalent metal cation is bound by residues Asp-11 and Glu-13. Substrate contacts are provided by Asp-11, Glu-13, Gln-60, and His-65. His-161 (proton acceptor) is an active-site residue. Asp-166 contacts a divalent metal cation. Position 166 (Asp-166) interacts with substrate.

As to quaternary structure, the DNA polymerase holoenzyme is a complex that contains 10 different types of subunits. These subunits are organized into 3 functionally essential subassemblies: the pol III core, the beta sliding clamp processivity factor and the clamp-loading complex. The pol III core (subunits alpha,epsilon and theta) contains the polymerase and the 3'-5' exonuclease proofreading activities. The polymerase is tethered to the template via the sliding clamp processivity factor. The clamp-loading complex assembles the beta processivity factor onto the primer template and plays a central role in the organization and communication at the replication fork. This complex contains delta, delta', psi and chi, and copies of either or both of two different DnaX proteins, gamma and tau. The composition of the holoenzyme is, therefore: (alpha,epsilon,theta)[2]-(gamma/tau)[3]-delta,delta', psi,chi-beta[4]. Mg(2+) is required as a cofactor. It depends on Mn(2+) as a cofactor.

The enzyme catalyses DNA(n) + a 2'-deoxyribonucleoside 5'-triphosphate = DNA(n+1) + diphosphate. Its function is as follows. DNA polymerase III is a complex, multichain enzyme responsible for most of the replicative synthesis in bacteria. The epsilon subunit contain the editing function and is a proofreading 3'-5' exonuclease. In Buchnera aphidicola subsp. Baizongia pistaciae (strain Bp), this protein is DNA polymerase III subunit epsilon (dnaQ).